Here is a 1051-residue protein sequence, read N- to C-terminus: Carbamoyl phosphate synthase large chain (1051 aa).

The segment at 1 to 399 (MKETPKKVLV…SLQKAVRMLD (399 aa)) is carboxyphosphate synthetic domain. The ATP site is built by Arg-127, Arg-167, Gly-173, Gly-174, Lys-206, Leu-208, Glu-213, Gly-239, Val-240, His-241, Gln-282, and Glu-296. In terms of domain architecture, ATP-grasp 1 spans 131 to 325 (RETMIENNLP…LAYVSAKLAL (195 aa)). Gln-282, Glu-296, and Asn-298 together coordinate Mg(2+). 3 residues coordinate Mn(2+): Gln-282, Glu-296, and Asn-298. The oligomerization domain stretch occupies residues 400–548 (IGEPGVVGGK…LTYNGTEDDL (149 aa)). The carbamoyl phosphate synthetic domain stretch occupies residues 549-930 (EFSQGNKLLI…LKSWLSSIPN (382 aa)). The ATP-grasp 2 domain occupies 673 to 863 (SKLLDKLGIS…LINEAMKAIF (191 aa)). Residues Arg-709, Lys-748, Ile-750, Glu-755, Gly-779, Val-780, His-781, Ser-782, Gln-822, and Glu-834 each coordinate ATP. Residues Gln-822, Glu-834, and Asn-836 each contribute to the Mg(2+) site. The Mn(2+) site is built by Gln-822, Glu-834, and Asn-836. The MGS-like domain maps to 930-1051 (NRIPNKNGIA…FEISEYGGGI (122 aa)). The allosteric domain stretch occupies residues 931–1051 (RIPNKNGIAL…FEISEYGGGI (121 aa)).

The protein belongs to the CarB family. In terms of assembly, composed of two chains; the small (or glutamine) chain promotes the hydrolysis of glutamine to ammonia, which is used by the large (or ammonia) chain to synthesize carbamoyl phosphate. Tetramer of heterodimers (alpha,beta)4. Mg(2+) serves as cofactor. Requires Mn(2+) as cofactor.

It carries out the reaction hydrogencarbonate + L-glutamine + 2 ATP + H2O = carbamoyl phosphate + L-glutamate + 2 ADP + phosphate + 2 H(+). The catalysed reaction is hydrogencarbonate + NH4(+) + 2 ATP = carbamoyl phosphate + 2 ADP + phosphate + 2 H(+). It participates in amino-acid biosynthesis; L-arginine biosynthesis; carbamoyl phosphate from bicarbonate: step 1/1. The protein operates within pyrimidine metabolism; UMP biosynthesis via de novo pathway; (S)-dihydroorotate from bicarbonate: step 1/3. Its function is as follows. Large subunit of the glutamine-dependent carbamoyl phosphate synthetase (CPSase). CPSase catalyzes the formation of carbamoyl phosphate from the ammonia moiety of glutamine, carbonate, and phosphate donated by ATP, constituting the first step of 2 biosynthetic pathways, one leading to arginine and/or urea and the other to pyrimidine nucleotides. The large subunit (synthetase) binds the substrates ammonia (free or transferred from glutamine from the small subunit), hydrogencarbonate and ATP and carries out an ATP-coupled ligase reaction, activating hydrogencarbonate by forming carboxy phosphate which reacts with ammonia to form carbamoyl phosphate. The sequence is that of Carbamoyl phosphate synthase large chain from Saccharolobus islandicus (strain L.S.2.15 / Lassen #1) (Sulfolobus islandicus).